The chain runs to 91 residues: UPF0250 protein BP0104 (91 aa).

Belongs to the UPF0250 family.

In Bordetella pertussis (strain Tohama I / ATCC BAA-589 / NCTC 13251), this protein is UPF0250 protein BP0104.